Reading from the N-terminus, the 308-residue chain is Ribosomal RNA large subunit methyltransferase F (308 aa).

The tract at residues 190–212 (DSAASARAGSERKRRNLGQDKND) is disordered.

The protein belongs to the methyltransferase superfamily. METTL16/RlmF family.

The protein resides in the cytoplasm. The enzyme catalyses adenosine(1618) in 23S rRNA + S-adenosyl-L-methionine = N(6)-methyladenosine(1618) in 23S rRNA + S-adenosyl-L-homocysteine + H(+). Functionally, specifically methylates the adenine in position 1618 of 23S rRNA. This chain is Ribosomal RNA large subunit methyltransferase F, found in Citrobacter koseri (strain ATCC BAA-895 / CDC 4225-83 / SGSC4696).